The primary structure comprises 335 residues: 3-hydroxyisobutyrate dehydrogenase, mitochondrial (335 aa).

A mitochondrion-targeting transit peptide spans 1-35 (MAASLGFRGAASGLWYWSGRRRPVGSLAAVCSRSM). Residue 39–68 (TPVGFIGLGNMGNPMAKNLMKHGYPLILYD) participates in NAD(+) binding. An N6-acetyllysine; alternate mark is found at Lys59, Lys75, and Lys78. N6-succinyllysine; alternate is present on residues Lys59, Lys75, and Lys78. At Lys94 the chain carries N6-succinyllysine. NAD(+)-binding positions include 102 to 103 (LP) and Asn107. Lys120 bears the N6-acetyllysine mark. Thr133 lines the NAD(+) pocket. N6-succinyllysine is present on Lys140. Residue Lys144 is modified to N6-acetyllysine. N6-acetyllysine; alternate is present on Lys148. Lys148 is subject to N6-succinyllysine; alternate. The active site involves Lys208. An N6-acetyllysine; alternate mark is found at Lys237 and Lys241. Lys237 and Lys241 each carry N6-succinyllysine; alternate. Residue Lys283 participates in NAD(+) binding. Lys296 carries the post-translational modification N6-succinyllysine. Lys320 is subject to N6-acetyllysine; alternate. Lys320 is modified (N6-succinyllysine; alternate).

The protein belongs to the HIBADH-related family. 3-hydroxyisobutyrate dehydrogenase subfamily. As to quaternary structure, homodimer.

It localises to the mitochondrion. It catalyses the reaction 3-hydroxy-2-methylpropanoate + NAD(+) = 2-methyl-3-oxopropanoate + NADH + H(+). Its pathway is amino-acid degradation; L-valine degradation. The polypeptide is 3-hydroxyisobutyrate dehydrogenase, mitochondrial (Hibadh) (Mus musculus (Mouse)).